The sequence spans 428 residues: Proteinase-activated receptor 1 (428 aa).

Positions 1–21 are cleaved as a signal peptide; that stretch reads MGPQRLLLVAAGLSLCGPLLS. Residues 22–41 constitute a propeptide, removed for receptor activation; sequence SRVPVRQPESEMTDATVNPR. Topologically, residues 42–105 are extracellular; it reads SFFLRNPGEN…SGYLTSPWLR (64 aa). 2 N-linked (GlcNAc...) asparagine glycosylation sites follow: Asn-65 and Asn-78. The helical transmembrane segment at 106–131 threads the bilayer; it reads LFIPSVYTFVFVVSLPLNILAIAVFV. Over 132 to 140 the chain is Cytoplasmic; that stretch reads LKMKVKKPA. Residues 141 to 160 traverse the membrane as a helical segment; it reads VVYMLHLAMADVLFVSVLPL. Residues 161–179 lie on the Extracellular side of the membrane; sequence KISYYFSGSDWQFGSGMCR. A disulfide bridge connects residues Cys-178 and Cys-257. A helical transmembrane segment spans residues 180–201; that stretch reads FATAAFYCNMYASIMLMTVISI. Over 202–221 the chain is Cytoplasmic; sequence DRFLAVVYPIQSLSWRTLGR. Residues 222-242 traverse the membrane as a helical segment; the sequence is ANFTCLVIWVMAIMGVVPLLL. The Extracellular portion of the chain corresponds to 243–271; it reads KEQTTRVPGLNITTCHDVLNETLLQGFYS. Residues Asn-253 and Asn-262 are each glycosylated (N-linked (GlcNAc...) asparagine). A helical membrane pass occupies residues 272-291; sequence YYFSAFSAVFFLVPLIISTI. Residues 292–314 lie on the Cytoplasmic side of the membrane; it reads CYMSIIRCLSSSSVANRSKKSRA. Residues 315 to 337 traverse the membrane as a helical segment; sequence LFLSAAVFCVFIVCFGPTNVLLI. The Extracellular portion of the chain corresponds to 338–352; it reads MHYLLLSDSPATEKA. The helical transmembrane segment at 353 to 377 threads the bilayer; sequence YFAYLLCVCVSSVSCCIDPLIYYYA. Over 378–428 the chain is Cytoplasmic; sequence SSECQRHLYGILCCKESSDPNSYNSTGQLMPSKMDTCSSHLNNSIYKKLLA. Phosphoserine is present on Ser-421.

The protein belongs to the G-protein coupled receptor 1 family. Proteolytic cleavage by thrombin generates a new N-terminus that functions as a tethered ligand. Also proteolytically cleaved by cathepsin CTSG. In terms of processing, phosphorylated in the C-terminal tail; probably mediating desensitization prior to the uncoupling and internalization of the receptor.

It is found in the cell membrane. High affinity receptor that binds the activated thrombin, leading to calcium release from intracellular stores. The thrombin-activated receptor signaling pathway is mediated through PTX-insensitive G proteins, activation of phospholipase C resulting in the production of 1D-myo-inositol 1,4,5-trisphosphate (InsP3) which binds to InsP3 receptors causing calcium release from the stores. In astrocytes, the calcium released into the cytosol allows the Ca(2+)-dependent release of L-glutamate into the synaptic cleft through BEST1, that targets the neuronal postsynaptic GRIN2A/NMDAR receptor resulting in the synaptic plasticity regulation. May play a role in platelets activation and in vascular development. Mediates up-regulation of pro-inflammatory cytokines, such as MCP-1/CCL2 and IL6, triggered by coagulation factor Xa (F10) in cardiac fibroblasts and umbilical vein endothelial cells. The chain is Proteinase-activated receptor 1 from Cricetulus longicaudatus (Long-tailed dwarf hamster).